A 208-amino-acid chain; its full sequence is Protein-L-isoaspartate O-methyltransferase (208 aa).

Ser-59 is a catalytic residue.

It belongs to the methyltransferase superfamily. L-isoaspartyl/D-aspartyl protein methyltransferase family.

The protein localises to the cytoplasm. It catalyses the reaction [protein]-L-isoaspartate + S-adenosyl-L-methionine = [protein]-L-isoaspartate alpha-methyl ester + S-adenosyl-L-homocysteine. Functionally, catalyzes the methyl esterification of L-isoaspartyl residues in peptides and proteins that result from spontaneous decomposition of normal L-aspartyl and L-asparaginyl residues. It plays a role in the repair and/or degradation of damaged proteins. The sequence is that of Protein-L-isoaspartate O-methyltransferase from Citrobacter koseri (strain ATCC BAA-895 / CDC 4225-83 / SGSC4696).